The primary structure comprises 156 residues: Transcription antitermination protein NusB (156 aa).

The protein belongs to the NusB family.

In terms of biological role, involved in transcription antitermination. Required for transcription of ribosomal RNA (rRNA) genes. Binds specifically to the boxA antiterminator sequence of the ribosomal RNA (rrn) operons. This is Transcription antitermination protein NusB from Mycobacterium bovis (strain ATCC BAA-935 / AF2122/97).